The following is a 413-amino-acid chain: Multifunctional CCA protein (413 aa).

ATP-binding residues include G8 and R11. Positions 8 and 11 each coordinate CTP. Mg(2+) is bound by residues D21 and D23. ATP contacts are provided by R91, R143, and R146. CTP is bound by residues R91, R143, and R146. Residues T232–L333 form the HD domain.

It belongs to the tRNA nucleotidyltransferase/poly(A) polymerase family. Bacterial CCA-adding enzyme type 1 subfamily. In terms of assembly, monomer. Can also form homodimers and oligomers. The cofactor is Mg(2+). Ni(2+) is required as a cofactor.

The enzyme catalyses a tRNA precursor + 2 CTP + ATP = a tRNA with a 3' CCA end + 3 diphosphate. It catalyses the reaction a tRNA with a 3' CCA end + 2 CTP + ATP = a tRNA with a 3' CCACCA end + 3 diphosphate. Its function is as follows. Catalyzes the addition and repair of the essential 3'-terminal CCA sequence in tRNAs without using a nucleic acid template. Adds these three nucleotides in the order of C, C, and A to the tRNA nucleotide-73, using CTP and ATP as substrates and producing inorganic pyrophosphate. tRNA 3'-terminal CCA addition is required both for tRNA processing and repair. Also involved in tRNA surveillance by mediating tandem CCA addition to generate a CCACCA at the 3' terminus of unstable tRNAs. While stable tRNAs receive only 3'-terminal CCA, unstable tRNAs are marked with CCACCA and rapidly degraded. This chain is Multifunctional CCA protein, found in Burkholderia cenocepacia (strain HI2424).